A 59-amino-acid chain; its full sequence is Large ribosomal subunit protein bL32 (59 aa).

A disordered region spans residues 1 to 24 (MAVQQNKKSPSKRGMHRSHDFLTS).

Belongs to the bacterial ribosomal protein bL32 family.

The chain is Large ribosomal subunit protein bL32 from Ralstonia nicotianae (strain ATCC BAA-1114 / GMI1000) (Ralstonia solanacearum).